Reading from the N-terminus, the 220-residue chain is MMRGTPQMPEAIATRKYFDREFDRQAIKLLPNEYYVTAEDVVLTTVLGSCVSACIRDEVAGVGGMNHFMLPDDENAGADRMLSTSMRYGCYALEVLINELLKMGARRERLEAKVFGGGAVLANMTTLNIGDRNADFVLKYLRTEEVRVAAQDLRGPHARRVSYFPRTGLALVRRLTRQDDTVGIEREERALARALSTSTKAPARGAVELFTRQTTARIPT.

Belongs to the CheD family.

It carries out the reaction L-glutaminyl-[protein] + H2O = L-glutamyl-[protein] + NH4(+). In terms of biological role, probably deamidates glutamine residues to glutamate on methyl-accepting chemotaxis receptors (MCPs), playing an important role in chemotaxis. In Cupriavidus metallidurans (strain ATCC 43123 / DSM 2839 / NBRC 102507 / CH34) (Ralstonia metallidurans), this protein is Probable chemoreceptor glutamine deamidase CheD.